A 266-amino-acid polypeptide reads, in one-letter code: Derlin-1 (266 aa).

The Cytoplasmic portion of the chain corresponds to 1-20 (MSSPGEFYNSLPPITKAYGT). A helical membrane pass occupies residues 21-41 (LCFFTTVATQLGLVAPVHIAL). Over 42 to 55 (IPELVLKQFQIWRL) the chain is Lumenal. Residues 56-76 (ITNLFFLGGFSINFGIRLLMI) form a helical membrane-spanning segment. Residues 77-94 (ARYGVQLEKGPFERRTAD) lie on the Cytoplasmic side of the membrane. Residues 95 to 115 (FLWMMIFGSFTLLVLSVIPFF) traverse the membrane as a helical segment. At 116-156 (WTPFLGVSLVFMLLYLWSREFPNANISLYGLVTLKAFYLPW) the chain is on the lumenal side. Residues 157–177 (AMLALDVIFGSPIMPDLLGII) form a helical membrane-spanning segment. Topologically, residues 178-266 (AGHLYYFLTV…FRGRSYRLTD (89 aa)) are cytoplasmic. Residues 235-266 (GGVGGGGAYSSARAPPESSNTAFRGRSYRLTD) are disordered.

The protein belongs to the derlin family.

It localises to the endoplasmic reticulum membrane. In terms of biological role, may be involved in the degradation process of specific misfolded endoplasmic reticulum (ER) luminal proteins. The protein is Derlin-1 (DER1) of Arabidopsis thaliana (Mouse-ear cress).